The chain runs to 131 residues: uncharacterized protein (131 aa).

A signal peptide spans 1–16; the sequence is MDVLFVAIFAVPLILG.

It is found in the secreted. This is an uncharacterized protein from Homo sapiens (Human).